The primary structure comprises 419 residues: Mitochondrial inner membrane magnesium transporter MRS2 (419 aa).

2 consecutive transmembrane segments (helical) span residues 297–317 (VTIVTVGFAVGAFVAALYGMN) and 328–348 (GMVLVVGVACLGGLLVTWFNL). The short motif at 314–317 (YGMN) is the YGMN element.

The protein belongs to the CorA metal ion transporter (MIT) (TC 1.A.35) family. Homopentamer. Forms homooligomers. Interacts with MFM1.

It localises to the mitochondrion inner membrane. High-conductance magnesium-selective channel that mediates the influx of magnesium into the mitochondrial matrix. Essential for the splicing of mRNA group II introns in mitochondria by affecting mitochondrial magnesium concentrations, which are critical for group II intron splicing. It also suppresses a variety of mitochondrial intron mutations and its absence may disturb the assembly of mitochondrial membrane complexes. The sequence is that of Mitochondrial inner membrane magnesium transporter MRS2 (MRS2) from Yarrowia lipolytica (strain CLIB 122 / E 150) (Yeast).